The following is a 138-amino-acid chain: SHSKHHATYVKGVNDAIAKLEEARANGDHGAIFLHEKNLAFHLGGHVNHTIWWKNLSPHGGDKPTGDLAAAIDDQFGSFDNFRAQFTAAANGLQGSGWAVLGYDTLGDRLLTFQLYDQQANVPLGIIPLLLVDMWEHA.

Mn(2+) contacts are provided by H2, H49, D133, and H137.

Belongs to the iron/manganese superoxide dismutase family. Mn(2+) is required as a cofactor.

It catalyses the reaction 2 superoxide + 2 H(+) = H2O2 + O2. Functionally, destroys superoxide anion radicals which are normally produced within the cells and which are toxic to biological systems. This chain is Superoxide dismutase [Mn] (sodA), found in Mycolicibacterium phlei (Mycobacterium phlei).